The sequence spans 147 residues: Large ribosomal subunit protein uL15 (147 aa).

The segment covering 1 to 13 (MRLHDLKPAEGAR) has biased composition (basic and acidic residues). Residues 1 to 58 (MRLHDLKPAEGARRERKRVGRGIGSGHGKTSGRGQKGQKARSGGGVRPGFEGGQMPLT) are disordered. Gly residues-rich tracts occupy residues 21–35 (RGIG…GRGQ) and 42–52 (SGGGVRPGFEG).

It belongs to the universal ribosomal protein uL15 family. In terms of assembly, part of the 50S ribosomal subunit.

Binds to the 23S rRNA. This Thermoanaerobacter sp. (strain X514) protein is Large ribosomal subunit protein uL15.